The sequence spans 436 residues: 3-ketoacyl-CoA thiolase (436 aa).

The Acyl-thioester intermediate role is filled by C99. Catalysis depends on proton acceptor residues H392 and C422.

This sequence belongs to the thiolase-like superfamily. Thiolase family. As to quaternary structure, heterotetramer of two alpha chains (FadJ) and two beta chains (FadI).

The protein localises to the cytoplasm. The catalysed reaction is an acyl-CoA + acetyl-CoA = a 3-oxoacyl-CoA + CoA. The protein operates within lipid metabolism; fatty acid beta-oxidation. Functionally, catalyzes the final step of fatty acid oxidation in which acetyl-CoA is released and the CoA ester of a fatty acid two carbons shorter is formed. In Salmonella typhi, this protein is 3-ketoacyl-CoA thiolase.